A 255-amino-acid chain; its full sequence is Hydroxyacylglutathione hydrolase (255 aa).

Residues His-56, His-58, Asp-60, His-61, His-114, Asp-133, and His-171 each coordinate Zn(2+).

It belongs to the metallo-beta-lactamase superfamily. Glyoxalase II family. In terms of assembly, monomer. Zn(2+) serves as cofactor.

The catalysed reaction is an S-(2-hydroxyacyl)glutathione + H2O = a 2-hydroxy carboxylate + glutathione + H(+). It participates in secondary metabolite metabolism; methylglyoxal degradation; (R)-lactate from methylglyoxal: step 2/2. Its function is as follows. Thiolesterase that catalyzes the hydrolysis of S-D-lactoyl-glutathione to form glutathione and D-lactic acid. This Nitrobacter hamburgensis (strain DSM 10229 / NCIMB 13809 / X14) protein is Hydroxyacylglutathione hydrolase.